Reading from the N-terminus, the 517-residue chain is Crotonobetaine/carnitine--CoA ligase (517 aa).

The protein belongs to the ATP-dependent AMP-binding enzyme family.

It catalyses the reaction 4-(trimethylamino)butanoate + ATP + CoA = 4-(trimethylamino)butanoyl-CoA + AMP + diphosphate. The catalysed reaction is crotonobetaine + ATP + CoA = crotonobetainyl-CoA + AMP + diphosphate. It carries out the reaction (R)-carnitine + ATP + CoA = (R)-carnitinyl-CoA + AMP + diphosphate. The protein operates within amine and polyamine metabolism; carnitine metabolism. Its function is as follows. Catalyzes the transfer of CoA to carnitine, generating the initial carnitinyl-CoA needed for the CaiB reaction cycle. Also has activity toward crotonobetaine and gamma-butyrobetaine. The polypeptide is Crotonobetaine/carnitine--CoA ligase (Shigella sonnei (strain Ss046)).